The sequence spans 384 residues: Probable endopolygalacturonase C (384 aa).

A signal peptide spans 1–19 (MVRQLALACGLLAAVAVQA). A propeptide spanning residues 20 to 40 (APAEPAHPMVTEAPDASLLHK) is cleaved from the precursor. A disulfide bridge links Cys-45 with Cys-63. PbH1 repeat units lie at residues 176-207 (ATDL…DIGE) and 208-229 (STDI…AINS). Asp-222 (proton donor) is an active-site residue. Cys-224 and Cys-240 form a disulfide bridge. Residue His-244 is part of the active site. 2 PbH1 repeats span residues 254 to 280 (RDDN…RIKA) and 288 to 310 (ISDI…VIEQ). Asn-261 carries an N-linked (GlcNAc...) asparagine glycan. Intrachain disulfides connect Cys-349–Cys-354 and Cys-373–Cys-382.

This sequence belongs to the glycosyl hydrolase 28 family.

Its subcellular location is the secreted. The enzyme catalyses (1,4-alpha-D-galacturonosyl)n+m + H2O = (1,4-alpha-D-galacturonosyl)n + (1,4-alpha-D-galacturonosyl)m.. Involved in maceration and soft-rotting of plant tissue. Hydrolyzes the 1,4-alpha glycosidic bonds of de-esterified pectate in the smooth region of the plant cell wall. This is Probable endopolygalacturonase C (pgaC) from Aspergillus aculeatus.